The sequence spans 520 residues: GMP synthase [glutamine-hydrolyzing] (520 aa).

The Glutamine amidotransferase type-1 domain occupies 9–202; that stretch reads TVLIVDFGSQ…VHKIAGIKGD (194 aa). Cys86 (nucleophile) is an active-site residue. Residues His176 and Glu178 contribute to the active site. One can recognise a GMPS ATP-PPase domain in the interval 203 to 395; it reads WTMSAYRAKA…LGLPESFIGR (193 aa). Position 230 to 236 (230 to 236) interacts with ATP; it reads SGGVDSS.

In terms of assembly, homodimer.

It catalyses the reaction XMP + L-glutamine + ATP + H2O = GMP + L-glutamate + AMP + diphosphate + 2 H(+). The protein operates within purine metabolism; GMP biosynthesis; GMP from XMP (L-Gln route): step 1/1. Catalyzes the synthesis of GMP from XMP. The sequence is that of GMP synthase [glutamine-hydrolyzing] from Sinorhizobium fredii (strain NBRC 101917 / NGR234).